Consider the following 874-residue polypeptide: MQSTLNLSTEEPVKRNTVKKYKIICIVLLILLVAVSLALGLVAGLRQQEEQGSCRKKCFDASHRGLEGCRCDVGCKGRGDCCWDFEDTCVQSTQIWTCNKFRCGETRLESSLCSCSDDCLQRKDCCADYKSVCQGETSWVDEDCSTAQQPQCPEGFDLPPVILFSMDGFRAEYLQTWSTLVPNINKLKTCGVHSQYLRPAYPTKTFPNHYTIVTGLYPESHGIIDNNMYDINLNKNFSLSSKEKDNPAWWQGQPIWLTAMYQGLKVGTYFWPGSDVAINGTFPSIYKIYNRSVTYEERIFTLLKWLDLPKAERPDFYTIYVEEPDSQGHNYGPVSAGVIQALQLVDKTFGLLMEGLKQRNLVNCVNIILLADHGMDQTYCDKLEYMADYFSSINFYMFEGPAPRIRTRNIPQDFFTFNSEEIVRNLSCRKPDQHFKPYLSPDLPKRLHFAKNVRIDKVNLLVDRQWQAVRNRAYSYCGGGNHGYDNEFKSMEAIFLAHGPSFKQKTEVEPFDNIEVYNLLCDLLHIQPAPNNGTHGSLNHLLKVPFYEPSHAEELSKFSVCGFTVPLPTDTLGCSCSRLQTNSDLERVNQMLDLTQDEITATEKLNLPFGRPRLIQKNKEPCLLYHREYVSGFDKTLRMPLWSSYTVPKPGDTSPLPPTVPDCLRADVRVAPSESQNCSFSLADKNITHGFLYPPANNRTSNSQYDALITSNLVPMYEAFKTMWNYFHSVLLVKYAMERNGVNVVSGPVFDYDYDGHFDAPDEIADYAVNTSVPIPTHYFVVLTSCKNQSQTPDACTGWLDVLPFVIPHRPTNVESCPENKSESLWVEERFNVHTARVRDVELLTGLDFYQEKAQPVSEILQLKTYLPVFETVI.

The Cytoplasmic segment spans residues 1–11 (MQSTLNLSTEE). Residues 12 to 30 (PVKRNTVKKYKIICIVLLI) traverse the membrane as a helical; Signal-anchor for type II membrane protein segment. Over 31-874 (LLVAVSLALG…TYLPVFETVI (844 aa)) the chain is Extracellular. SMB domains are found at residues 50-93 (EQGS…VQST) and 94-138 (QIWT…GETS). Disulfide bonds link C54-C71, C58-C89, C69-C82, C75-C81, C98-C115, C103-C133, C113-C126, C119-C125, C144-C190, and C152-C364. The short motif at 78–80 (RGD) is the Cell attachment site element. The segment at 160-544 (PVILFSMDGF…HGSLNHLLKV (385 aa)) is phosphodiesterase. D167 is a binding site for Zn(2+). K204 contributes to the ATP binding site. A Zn(2+)-binding site is contributed by T205. The active-site Nucleophile is the T205. N226 is an ATP binding site. N-linked (GlcNAc...) asparagine glycosylation occurs at N236. D275 contributes to the ATP binding site. The N-linked (GlcNAc...) asparagine glycan is linked to N279. Y289 contacts ATP. N-linked (GlcNAc...) asparagine glycosylation is present at N290. Residues D325, H329, D372, and H373 each coordinate Zn(2+). 6 cysteine pairs are disulfide-bonded: C380–C477, C428–C817, C561–C622, C574–C678, C576–C663, and C786–C796. An N-linked (GlcNAc...) asparagine glycan is attached at N425. A Zn(2+)-binding site is contributed by H482. N-linked (GlcNAc...) asparagine glycosylation occurs at N532. A nuclease region spans residues 581–874 (TNSDLERVNQ…TYLPVFETVI (294 aa)). 3 N-linked (GlcNAc...) asparagine glycosylation sites follow: N677, N686, and N698. Residues D751, D755, H757, and D759 each coordinate Ca(2+). 3 N-linked (GlcNAc...) asparagine glycosylation sites follow: N770, N788, and N820.

The protein belongs to the nucleotide pyrophosphatase/phosphodiesterase family. As to quaternary structure, monomer and homodimer. Requires Zn(2+) as cofactor. N-glycosylated. N-glycosylation is necessary for normal transport to the cell membrane, but is not the apical targeting signal.

The protein localises to the cell membrane. Its subcellular location is the apical cell membrane. The protein resides in the secreted. It carries out the reaction a ribonucleoside 5'-triphosphate + H2O = a ribonucleoside 5'-phosphate + diphosphate + H(+). The catalysed reaction is ATP + H2O = AMP + diphosphate + H(+). It catalyses the reaction CTP + H2O = CMP + diphosphate + H(+). The enzyme catalyses GTP + H2O = GMP + diphosphate + H(+). It carries out the reaction UTP + H2O = UMP + diphosphate + H(+). The catalysed reaction is UDP-N-acetyl-alpha-D-glucosamine + H2O = N-acetyl-alpha-D-glucosamine 1-phosphate + UMP + 2 H(+). It catalyses the reaction P(1),P(3)-bis(5'-adenosyl) triphosphate + H2O = AMP + ADP + 2 H(+). The enzyme catalyses P(1),P(4)-bis(5'-adenosyl) tetraphosphate + H2O = AMP + ATP + 2 H(+). It carries out the reaction P(1),P(5)-bis(5'-adenosyl) pentaphosphate + H2O = adenosine 5'-tetraphosphate + AMP + 2 H(+). The catalysed reaction is P(1),P(4)-bis(5'-guanosyl) tetraphosphate + H2O = GMP + GTP + 2 H(+). It catalyses the reaction Hydrolytically removes 5'-nucleotides successively from the 3'-hydroxy termini of 3'-hydroxy-terminated oligonucleotides.. Functionally, hydrolase that metabolizes extracellular nucleotides, including ATP, GTP, UTP and CTP. Limits mast cells and basophils response during inflammation and during the chronic phases of allergic responses by eliminating extracellular ATP, a signaling molecule activating these cells in an autocrine manner. Metabolizes extracellular ATP in the lumen of the small intestine, and thereby prevents ATP-induced apoptosis of intestinal plasmacytoid dendritic cells. Has a broad specificity and can also hydrolyze UDP-GlcNAc into UMP and GlcNAc-1-phosphate and potentially several other intracellular nucleotide sugars, including UDP-GalNAc, CMP-NeuAc, GDP-Fuc, and UDP-GlcA. Thereby, could modulate glycan biosynthesis and protein glycosylation. Can hydrolyze extracellular dinucleoside polyphosphates, including the vasoactive adenosine polyphosphates as well. In addition, displays an alkaline phosphodiesterase activity in vitro. The chain is Ectonucleotide pyrophosphatase/phosphodiesterase family member 3 (ENPP3) from Bos taurus (Bovine).